The primary structure comprises 238 residues: Pyridoxine 5'-phosphate synthase (238 aa).

Residue Asn-7 coordinates 3-amino-2-oxopropyl phosphate. Position 9–10 (9–10 (DH)) interacts with 1-deoxy-D-xylulose 5-phosphate. A 3-amino-2-oxopropyl phosphate-binding site is contributed by Arg-18. Residue His-43 is the Proton acceptor of the active site. Residues Arg-45 and His-50 each contribute to the 1-deoxy-D-xylulose 5-phosphate site. Glu-70 serves as the catalytic Proton acceptor. Thr-100 is a binding site for 1-deoxy-D-xylulose 5-phosphate. The active-site Proton donor is the His-190. 3-amino-2-oxopropyl phosphate is bound by residues Gly-191 and 212–213 (GH).

It belongs to the PNP synthase family. Homooctamer; tetramer of dimers.

The protein resides in the cytoplasm. It catalyses the reaction 3-amino-2-oxopropyl phosphate + 1-deoxy-D-xylulose 5-phosphate = pyridoxine 5'-phosphate + phosphate + 2 H2O + H(+). It functions in the pathway cofactor biosynthesis; pyridoxine 5'-phosphate biosynthesis; pyridoxine 5'-phosphate from D-erythrose 4-phosphate: step 5/5. In terms of biological role, catalyzes the complicated ring closure reaction between the two acyclic compounds 1-deoxy-D-xylulose-5-phosphate (DXP) and 3-amino-2-oxopropyl phosphate (1-amino-acetone-3-phosphate or AAP) to form pyridoxine 5'-phosphate (PNP) and inorganic phosphate. The chain is Pyridoxine 5'-phosphate synthase from Prochlorococcus marinus subsp. pastoris (strain CCMP1986 / NIES-2087 / MED4).